We begin with the raw amino-acid sequence, 254 residues long: Nickel import ATP-binding protein NikD (254 aa).

The ABC transporter domain maps to 2–241; the sequence is PQQIELRNIT…PKHTVTRSLV (240 aa). Position 36-43 (36-43) interacts with ATP; it reads GGSGSGKS.

This sequence belongs to the ABC transporter superfamily. Nickel importer (TC 3.A.1.5.3) family. The complex is composed of two ATP-binding proteins (NikD and NikE), two transmembrane proteins (NikB and NikC) and a solute-binding protein (NikA).

It localises to the cell inner membrane. It carries out the reaction Ni(2+)(out) + ATP + H2O = Ni(2+)(in) + ADP + phosphate + H(+). Part of the ABC transporter complex NikABCDE involved in nickel import. Responsible for energy coupling to the transport system. The chain is Nickel import ATP-binding protein NikD from Shigella flexneri.